Reading from the N-terminus, the 263-residue chain is Proteasome subunit alpha (263 aa).

The tract at residues 229 to 263 (AALLQDTPPDDADADADAGKKPANDGNLPPNDDKS) is disordered.

It belongs to the peptidase T1A family. In terms of assembly, the 20S proteasome core is composed of 14 alpha and 14 beta subunits that assemble into four stacked heptameric rings, resulting in a barrel-shaped structure. The two inner rings, each composed of seven catalytic beta subunits, are sandwiched by two outer rings, each composed of seven alpha subunits. The catalytic chamber with the active sites is on the inside of the barrel. Has a gated structure, the ends of the cylinder being occluded by the N-termini of the alpha-subunits. Is capped by the proteasome-associated ATPase, ARC.

The protein localises to the cytoplasm. Its pathway is protein degradation; proteasomal Pup-dependent pathway. With respect to regulation, the formation of the proteasomal ATPase ARC-20S proteasome complex, likely via the docking of the C-termini of ARC into the intersubunit pockets in the alpha-rings, may trigger opening of the gate for substrate entry. Interconversion between the open-gate and close-gate conformations leads to a dynamic regulation of the 20S proteasome proteolysis activity. In terms of biological role, component of the proteasome core, a large protease complex with broad specificity involved in protein degradation. The polypeptide is Proteasome subunit alpha (Actinosynnema mirum (strain ATCC 29888 / DSM 43827 / JCM 3225 / NBRC 14064 / NCIMB 13271 / NRRL B-12336 / IMRU 3971 / 101)).